A 187-amino-acid polypeptide reads, in one-letter code: NADPH-dependent 3-demethoxyubiquinone 3-hydroxylase, mitochondrial (187 aa).

Residues 1 to 8 constitute a mitochondrion transit peptide; the sequence is MFRVITRG. An NADH-binding site is contributed by Lys-21. 2 tandem repeats follow at residues 28 to 99 and 100 to 187. The segment at 28 to 187 is 2 X approximate tandem repeats; that stretch reads AGELGADRIY…KGAIAIAEKI (160 aa). Fe cation contacts are provided by Glu-30, Glu-60, His-63, Glu-112, Glu-148, and His-151. An NADH-binding site is contributed by Lys-186.

It belongs to the COQ7 family. As to quaternary structure, component of a multi-subunit COQ enzyme complex. Fe cation is required as a cofactor.

The protein localises to the mitochondrion inner membrane. The protein resides in the mitochondrion. Its subcellular location is the nucleus. The enzyme catalyses a 5-methoxy-2-methyl-3-(all-trans-polyprenyl)benzoquinone + NADH + O2 = a 3-demethylubiquinone + NAD(+) + H2O. The protein operates within cofactor biosynthesis; ubiquinone biosynthesis. Catalyzes the hydroxylation of the 5-methoxy-2-methyl-3-(all-trans-polyprenyl)benzoquinone at the C6 position and participates in the biosynthesis of ubiquinone. Catalyzes the reaction through a substrate-mediated reduction pathway, whereby NADH shuttles electrons to 5-methoxy-2-methyl-3-(all-trans-decaprenyl)benzoquinone, which then transfers the electrons to the two Fe(3+) centers. The binding of 5-methoxy-2-methyl-3-(all-trans-polyprenyl)benzoquinone (DMQn) mediates reduction of the diiron center by nicotinamide adenine dinucleotide (NADH) and initiates oxygen activation for subsequent DMQ hydroxylation. Also has a structural role in the COQ enzyme complex, stabilizing other COQ polypeptides. Involved in lifespan determination in a ubiquinone-independent manner. Plays a role in modulating mitochondrial stress responses, acting in the nucleus, perhaps via regulating gene expression, independent of its characterized mitochondrial function in ubiquinone biosynthesis. Plays a role in modulating polyribosome formation. The polypeptide is NADPH-dependent 3-demethoxyubiquinone 3-hydroxylase, mitochondrial (Caenorhabditis elegans).